A 101-amino-acid chain; its full sequence is NAD(P)H-quinone oxidoreductase subunit 4L, chloroplastic (101 aa).

The next 3 membrane-spanning stretches (helical) occupy residues 2–22, 32–52, and 61–81; these read MLEY…YGLI, MCLE…SDLF, and IFSI…PAIV.

This sequence belongs to the complex I subunit 4L family. NDH is composed of at least 16 different subunits, 5 of which are encoded in the nucleus.

The protein localises to the plastid. The protein resides in the chloroplast thylakoid membrane. The enzyme catalyses a plastoquinone + NADH + (n+1) H(+)(in) = a plastoquinol + NAD(+) + n H(+)(out). It catalyses the reaction a plastoquinone + NADPH + (n+1) H(+)(in) = a plastoquinol + NADP(+) + n H(+)(out). In terms of biological role, NDH shuttles electrons from NAD(P)H:plastoquinone, via FMN and iron-sulfur (Fe-S) centers, to quinones in the photosynthetic chain and possibly in a chloroplast respiratory chain. The immediate electron acceptor for the enzyme in this species is believed to be plastoquinone. Couples the redox reaction to proton translocation, and thus conserves the redox energy in a proton gradient. This chain is NAD(P)H-quinone oxidoreductase subunit 4L, chloroplastic, found in Acorus calamus var. americanus (American sweet flag).